Reading from the N-terminus, the 225-residue chain is MPSLLLIEDDDAIRTALELSLTRQGHRVATAASGEDGLKLLREQRPDLIVLDVMLPGIDGFEVCRRIRRTDQLPIILLTARNDDIDVVVGLESGADDYVVKPVQGRVLDARIRAVLRRGERESTDSASFGSLVIDRSAMTVTKNGEDLQLTPTELRLLLELSRRPGQALSRQQLLRLVWEHDYLGDSRLVDACVQRLRAKVEDVPSSPTLIRTVRGVGYRLDPPQ.

Residues 3 to 116 (SLLLIEDDDA…VLDARIRAVL (114 aa)) enclose the Response regulatory domain. D52 bears the 4-aspartylphosphate mark. A DNA-binding region (ompR/PhoB-type) is located at residues 124–223 (TDSASFGSLV…VRGVGYRLDP (100 aa)).

In terms of processing, phosphorylated by AfsQ2.

The protein resides in the cytoplasm. Its subcellular location is the nucleoid. Forms part of a two-component regulatory system AfsQ1/AfsQ2 involved in secondary metabolism. This Streptomyces coelicolor (strain ATCC BAA-471 / A3(2) / M145) protein is Transcriptional regulatory protein AfsQ1.